The chain runs to 277 residues: Ribonuclease HII (277 aa).

Residues 72–260 (EYIAGIDEAG…IKEMIEMKKE (189 aa)) form the RNase H type-2 domain. Residues Asp78, Glu79, and Asp170 each contribute to the a divalent metal cation site.

This sequence belongs to the RNase HII family. Mn(2+) serves as cofactor. The cofactor is Mg(2+).

It is found in the cytoplasm. The enzyme catalyses Endonucleolytic cleavage to 5'-phosphomonoester.. Endonuclease that specifically degrades the RNA of RNA-DNA hybrids. This chain is Ribonuclease HII, found in Geobacillus sp. (strain WCH70).